The chain runs to 119 residues: Large ribosomal subunit protein bL17 (119 aa).

It belongs to the bacterial ribosomal protein bL17 family. As to quaternary structure, part of the 50S ribosomal subunit. Contacts protein L32.

The polypeptide is Large ribosomal subunit protein bL17 (Mesoplasma florum (strain ATCC 33453 / NBRC 100688 / NCTC 11704 / L1) (Acholeplasma florum)).